Reading from the N-terminus, the 191-residue chain is Ribosomal RNA large subunit methyltransferase E (191 aa).

5 residues coordinate S-adenosyl-L-methionine: G49, W51, D66, D82, and D105. Residue K145 is the Proton acceptor of the active site.

The protein belongs to the class I-like SAM-binding methyltransferase superfamily. RNA methyltransferase RlmE family.

It is found in the cytoplasm. It catalyses the reaction uridine(2552) in 23S rRNA + S-adenosyl-L-methionine = 2'-O-methyluridine(2552) in 23S rRNA + S-adenosyl-L-homocysteine + H(+). Specifically methylates the uridine in position 2552 of 23S rRNA at the 2'-O position of the ribose in the fully assembled 50S ribosomal subunit. The sequence is that of Ribosomal RNA large subunit methyltransferase E from Archaeoglobus fulgidus (strain ATCC 49558 / DSM 4304 / JCM 9628 / NBRC 100126 / VC-16).